Reading from the N-terminus, the 567-residue chain is Hexose transporter HXT11 (567 aa).

Positions methionine 1–alanine 22 are enriched in polar residues. Residues methionine 1–glutamate 45 are disordered. Over methionine 1–serine 56 the chain is Cytoplasmic. The chain crosses the membrane as a helical span at residues alanine 57 to tryptophan 77. Residues aspartate 78–glycine 112 are Extracellular-facing. N-linked (GlcNAc...) asparagine glycosylation occurs at asparagine 87. The helical transmembrane segment at leucine 113–glycine 133 threads the bilayer. At aspartate 134 to arginine 139 the chain is on the cytoplasmic side. Residues isoleucine 140–isoleucine 160 form a helical membrane-spanning segment. Topologically, residues asparagine 161 to arginine 170 are extracellular. The chain crosses the membrane as a helical span at residues isoleucine 171 to valine 191. At alanine 192 to arginine 197 the chain is on the cytoplasmic side. The chain crosses the membrane as a helical span at residues glycine 198–threonine 218. Residues asparagine 219–arginine 232 are Extracellular-facing. An N-linked (GlcNAc...) asparagine glycan is attached at asparagine 227. The helical transmembrane segment at valine 233–proline 253 threads the bilayer. Residues glutamate 254–aspartate 336 are Cytoplasmic-facing. The chain crosses the membrane as a helical span at residues asparagine 337–lysine 353. At aspartate 354 to serine 359 the chain is on the extracellular side. Residues isoleucine 360–isoleucine 377 form a helical membrane-spanning segment. Over glutamate 378–threonine 384 the chain is Cytoplasmic. A helical membrane pass occupies residues cysteine 385–valine 405. Topologically, residues threonine 406–valine 429 are extracellular. The chain crosses the membrane as a helical span at residues phenylalanine 430–valine 450. The Cytoplasmic portion of the chain corresponds to serine 451–threonine 467. Residues alanine 468–isoleucine 488 form a helical membrane-spanning segment. Residue asparagine 489 is a topological domain, extracellular. A helical transmembrane segment spans residues phenylalanine 490–phenylalanine 510. The Cytoplasmic portion of the chain corresponds to valine 511–serine 567.

Belongs to the major facilitator superfamily. Sugar transporter (TC 2.A.1.1) family.

It localises to the membrane. Probable glucose transporter. This chain is Hexose transporter HXT11 (HXT11), found in Saccharomyces cerevisiae (strain ATCC 204508 / S288c) (Baker's yeast).